The sequence spans 462 residues: 3-deoxy-D-manno-octulosonic acid transferase (462 aa).

The chain crosses the membrane as a helical; Signal-anchor span at residues Met2–Ile22. Positions Ser47–Tyr90 constitute an RPE1 insert domain. Catalysis depends on Glu104, which acts as the Proton acceptor. CMP contacts are provided by residues Pro308 to Arg309, Phe349 to Glu351, and Asn374 to Glu377.

This sequence belongs to the glycosyltransferase group 1 family.

The protein localises to the cell inner membrane. The catalysed reaction is lipid IVA (E. coli) + CMP-3-deoxy-beta-D-manno-octulosonate = alpha-Kdo-(2-&gt;6)-lipid IVA (E. coli) + CMP + H(+). It participates in bacterial outer membrane biogenesis; LPS core biosynthesis. Its function is as follows. Involved in lipopolysaccharide (LPS) biosynthesis. Catalyzes the transfer of 3-deoxy-D-manno-octulosonate (Kdo) residue(s) from CMP-Kdo to lipid IV(A), the tetraacyldisaccharide-1,4'-bisphosphate precursor of lipid A. This Rickettsia typhi (strain ATCC VR-144 / Wilmington) protein is 3-deoxy-D-manno-octulosonic acid transferase (waaA).